The following is a 551-amino-acid chain: Arginine--tRNA ligase (551 aa).

The 'HIGH' region motif lies at 125–135 (ANPTGPLHIGH).

It belongs to the class-I aminoacyl-tRNA synthetase family. In terms of assembly, monomer.

It localises to the cytoplasm. It catalyses the reaction tRNA(Arg) + L-arginine + ATP = L-arginyl-tRNA(Arg) + AMP + diphosphate. In Nitratidesulfovibrio vulgaris (strain ATCC 29579 / DSM 644 / CCUG 34227 / NCIMB 8303 / VKM B-1760 / Hildenborough) (Desulfovibrio vulgaris), this protein is Arginine--tRNA ligase.